The following is a 301-amino-acid chain: Probable alpha-L-glutamate ligase (301 aa).

Residues 104–287 (LQLLSRKGVG…VAALVMEFIE (184 aa)) enclose the ATP-grasp domain. Residues Lys-141, 178-179 (EY), Asp-187, and 211-213 (RSN) contribute to the ATP site. Positions 248, 260, and 262 each coordinate Mg(2+). Asp-248, Glu-260, and Asn-262 together coordinate Mn(2+).

Belongs to the RimK family. The cofactor is Mg(2+). Mn(2+) serves as cofactor.

The chain is Probable alpha-L-glutamate ligase from Saccharophagus degradans (strain 2-40 / ATCC 43961 / DSM 17024).